The following is a 612-amino-acid chain: Alpha-glycerophosphate oxidase (612 aa).

21–49 (DLLIIGGGITGAGVALQAAASGLDTGLIE) is a binding site for FAD. Residues 398-408 (VETSTSEKELD) show a composition bias toward basic and acidic residues. The interval 398-418 (VETSTSEKELDPSAVSRGSSF) is disordered.

It belongs to the FAD-dependent glycerol-3-phosphate dehydrogenase family. The cofactor is FAD.

Its subcellular location is the cytoplasm. It catalyses the reaction sn-glycerol 3-phosphate + O2 = dihydroxyacetone phosphate + H2O2. This Streptococcus pyogenes serotype M18 (strain MGAS8232) protein is Alpha-glycerophosphate oxidase (glpO).